The chain runs to 283 residues: 2-dehydro-3-deoxyphosphooctonate aldolase (283 aa).

It belongs to the KdsA family.

The protein resides in the cytoplasm. It carries out the reaction D-arabinose 5-phosphate + phosphoenolpyruvate + H2O = 3-deoxy-alpha-D-manno-2-octulosonate-8-phosphate + phosphate. It participates in carbohydrate biosynthesis; 3-deoxy-D-manno-octulosonate biosynthesis; 3-deoxy-D-manno-octulosonate from D-ribulose 5-phosphate: step 2/3. It functions in the pathway bacterial outer membrane biogenesis; lipopolysaccharide biosynthesis. This Synechococcus sp. (strain WH7803) protein is 2-dehydro-3-deoxyphosphooctonate aldolase.